We begin with the raw amino-acid sequence, 587 residues long: Pyruvate kinase (587 aa).

Residue Arg33 participates in substrate binding. K(+) contacts are provided by Asn35, Ser37, Asp67, and Thr68. ATP is bound at residue 35–38; that stretch reads NFSH. Residues Arg74 and Lys157 each coordinate ATP. Lys221 contributes to the substrate binding site. Glu223 is a binding site for Mg(2+). 3 residues coordinate substrate: Gly246, Asp247, and Thr279. Residue Asp247 coordinates Mg(2+).

The protein belongs to the pyruvate kinase family. This sequence in the C-terminal section; belongs to the PEP-utilizing enzyme family. Homotetramer. Requires Mg(2+) as cofactor. K(+) is required as a cofactor. The N-terminus is blocked.

The enzyme catalyses pyruvate + ATP = phosphoenolpyruvate + ADP + H(+). Its pathway is carbohydrate degradation; glycolysis; pyruvate from D-glyceraldehyde 3-phosphate: step 5/5. With respect to regulation, exhibits homotropic positive cooperativity for PEP. Allosterically activated by ribose-5-phosphate, AMP and other nucleoside monophosphates but not by fructose-1,6-bisphosphate. Catalyzes the phosphoryl transfer from phosphoenolpyruvate (PEP) to ADP to form pyruvate and ATP. Has a broad specificity for nucleoside diphosphates and can use ADP, GDP, IDP and UDP. The polypeptide is Pyruvate kinase (pyk) (Geobacillus stearothermophilus (Bacillus stearothermophilus)).